Here is a 68-residue protein sequence, read N- to C-terminus: ATP synthase F(0) complex subunit 8 (68 aa).

Residues 8–24 form a helical membrane-spanning segment; that stretch reads TWLITILSMILTLLIVF. Lys-54 carries the N6-acetyllysine; alternate modification. Lys-54 is subject to N6-succinyllysine; alternate. Lys-57 bears the N6-acetyllysine mark.

The protein belongs to the ATPase protein 8 family. As to quaternary structure, component of the ATP synthase complex composed at least of ATP5F1A/subunit alpha, ATP5F1B/subunit beta, ATP5MC1/subunit c (homooctomer), MT-ATP6/subunit a, MT-ATP8/subunit 8, ATP5ME/subunit e, ATP5MF/subunit f, ATP5MG/subunit g, ATP5MK/subunit k, ATP5MJ/subunit j, ATP5F1C/subunit gamma, ATP5F1D/subunit delta, ATP5F1E/subunit epsilon, ATP5PF/subunit F6, ATP5PB/subunit b, ATP5PD/subunit d, ATP5PO/subunit OSCP. ATP synthase complex consists of a soluble F(1) head domain (subunits alpha(3) and beta(3)) - the catalytic core - and a membrane F(0) domain - the membrane proton channel (subunits c, a, 8, e, f, g, k and j). These two domains are linked by a central stalk (subunits gamma, delta, and epsilon) rotating inside the F1 region and a stationary peripheral stalk (subunits F6, b, d, and OSCP). Interacts with PRICKLE3.

It is found in the mitochondrion membrane. Functionally, subunit 8, of the mitochondrial membrane ATP synthase complex (F(1)F(0) ATP synthase or Complex V) that produces ATP from ADP in the presence of a proton gradient across the membrane which is generated by electron transport complexes of the respiratory chain. ATP synthase complex consist of a soluble F(1) head domain - the catalytic core - and a membrane F(1) domain - the membrane proton channel. These two domains are linked by a central stalk rotating inside the F(1) region and a stationary peripheral stalk. During catalysis, ATP synthesis in the catalytic domain of F(1) is coupled via a rotary mechanism of the central stalk subunits to proton translocation. In vivo, can only synthesize ATP although its ATP hydrolase activity can be activated artificially in vitro. Part of the complex F(0) domain. The sequence is that of ATP synthase F(0) complex subunit 8 from Lemur catta (Ring-tailed lemur).